Consider the following 208-residue polypeptide: Large ribosomal subunit protein uL4 (208 aa).

Positions 45-85 (RQGTHKAKTRAQVRGGGRKPYRQKGTGNARQGSTRSPLMIG) are disordered. The span at 46–66 (QGTHKAKTRAQVRGGGRKPYR) shows a compositional bias: basic residues. Residues 69–80 (GTGNARQGSTRS) are compositionally biased toward polar residues.

It belongs to the universal ribosomal protein uL4 family. As to quaternary structure, part of the 50S ribosomal subunit.

One of the primary rRNA binding proteins, this protein initially binds near the 5'-end of the 23S rRNA. It is important during the early stages of 50S assembly. It makes multiple contacts with different domains of the 23S rRNA in the assembled 50S subunit and ribosome. Its function is as follows. Forms part of the polypeptide exit tunnel. The protein is Large ribosomal subunit protein uL4 of Chlorobium phaeobacteroides (strain DSM 266 / SMG 266 / 2430).